Reading from the N-terminus, the 678-residue chain is Elongation factor G 2 (678 aa).

Positions 4 to 278 (QKLRNIGIIA…AVVDYLPSPQ (275 aa)) constitute a tr-type G domain. Residues 13–20 (AHVDAGKT), 77–81 (DTPGH), and 131–134 (NKMD) contribute to the GTP site.

This sequence belongs to the TRAFAC class translation factor GTPase superfamily. Classic translation factor GTPase family. EF-G/EF-2 subfamily.

Its subcellular location is the cytoplasm. Functionally, catalyzes the GTP-dependent ribosomal translocation step during translation elongation. During this step, the ribosome changes from the pre-translocational (PRE) to the post-translocational (POST) state as the newly formed A-site-bound peptidyl-tRNA and P-site-bound deacylated tRNA move to the P and E sites, respectively. Catalyzes the coordinated movement of the two tRNA molecules, the mRNA and conformational changes in the ribosome. The protein is Elongation factor G 2 of Hahella chejuensis (strain KCTC 2396).